Reading from the N-terminus, the 1242-residue chain is Protein STU1 (1242 aa).

Low complexity-rich tracts occupy residues 138–156 (LNSS…TATK) and 548–567 (AASP…PSSA). Disordered stretches follow at residues 138–161 (LNSS…KPHE), 538–612 (KQLE…NPVF), 637–711 (HVET…LGLG), 748–839 (AEHE…NGNI), 853–884 (AFQT…RPEA), and 1077–1111 (HPAP…EKRT). Positions 574 to 593 (KKMDLKAMLAERRRAVKEAG) are enriched in basic and acidic residues. 2 stretches are compositionally biased toward low complexity: residues 640–660 (TSSP…RIRP) and 701–711 (SPSLSPSLGLG). Over residues 748 to 767 (AEHEVDELTLKEGQKTRDDG) the composition is skewed to basic and acidic residues. Polar residues-rich tracts occupy residues 802–815 (QQGN…SGRV), 824–837 (ATGT…SRNG), and 856–871 (TPLN…SSAI). The span at 1082 to 1104 (SSSADNSDPMTSALSQLSLSSSK) shows a compositional bias: low complexity.

The protein belongs to the CLASP family. Interacts with microtubules.

The protein localises to the cytoplasm. The protein resides in the cytoskeleton. It is found in the nucleus. Its subcellular location is the spindle. Functionally, microtubule binding protein that promotes the stabilization of dynamic microtubules. Required for mitotic spindle formation. This is Protein STU1 (STU1) from Cryptococcus neoformans var. neoformans serotype D (strain B-3501A) (Filobasidiella neoformans).